The sequence spans 167 residues: Interferon gamma (167 aa).

Residues 1–23 (MNYTGYLLAFQLCIILGSSSCYC) form the signal peptide. Gln24 bears the Pyrrolidone carboxylic acid mark. 2 N-linked (GlcNAc...) asparagine glycosylation sites follow: Asn39 and Asn105. Positions 148 to 167 (SNLRKRKRSQSTFHGRRASI) are disordered. Over residues 149-167 (NLRKRKRSQSTFHGRRASI) the composition is skewed to basic residues.

This sequence belongs to the type II (or gamma) interferon family. Homodimer. Interacts with IFNGR1 (via extracellular domain); this interaction promotes IFNGR1 dimerization. In terms of tissue distribution, released primarily from activated T lymphocytes.

It localises to the secreted. Its function is as follows. Type II interferon produced by immune cells such as T-cells and NK cells that plays crucial roles in antimicrobial, antiviral, and antitumor responses by activating effector immune cells and enhancing antigen presentation. Primarily signals through the JAK-STAT pathway after interaction with its receptor IFNGR1 to affect gene regulation. Upon IFNG binding, IFNGR1 intracellular domain opens out to allow association of downstream signaling components JAK2, JAK1 and STAT1, leading to STAT1 activation, nuclear translocation and transcription of IFNG-regulated genes. Many of the induced genes are transcription factors such as IRF1 that are able to further drive regulation of a next wave of transcription. Plays a role in class I antigen presentation pathway by inducing a replacement of catalytic proteasome subunits with immunoproteasome subunits. In turn, increases the quantity, quality, and repertoire of peptides for class I MHC loading. Increases the efficiency of peptide generation also by inducing the expression of activator PA28 that associates with the proteasome and alters its proteolytic cleavage preference. Up-regulates as well MHC II complexes on the cell surface by promoting expression of several key molecules such as cathepsins B/CTSB, H/CTSH, and L/CTSL. Participates in the regulation of hematopoietic stem cells during development and under homeostatic conditions by affecting their development, quiescence, and differentiation. The protein is Interferon gamma (IFNG) of Dasypus novemcinctus (Nine-banded armadillo).